A 579-amino-acid chain; its full sequence is Suppressor of cytokine signaling 7 (579 aa).

3 disordered regions span residues 1 to 25 (MVFR…GPSE), 89 to 270 (PPPP…RTQS), and 295 to 315 (QRGL…RSLS). 3 stretches are compositionally biased toward pro residues: residues 89 to 99 (PPPPQPPPPAA), 155 to 165 (PPGPELPPVPF), and 185 to 196 (QPPPPPPPPGPL). The tract at residues 124–492 (AESLETNSCS…GKFLYFLRSR (369 aa)) is mediates interaction with SORBS3. The span at 206-217 (GSFKIRLSRLFR) shows a compositional bias: basic residues. The segment covering 301–311 (PHPPTPPPPPR) has biased composition (pro residues). An SH2 domain is found at 398-507 (WYWGPMNWED…PTPVQLLYPV (110 aa)). In terms of domain architecture, SOCS box spans 502 to 552 (QLLYPVSRFSNVKSLQHLCRFRIRQLVRIDHIPDLPLPKPLISYIRKFYYY).

Substrate-recognition component of the ECS(SOCS7) complex, composed of SOCS7, CUL5, ELOB, ELOC and RNF7/RBX2. Interacts, via the third proline-rich region, with the second SH3 domain of the adapter protein NCK1. Also interacts with GRB2, INSR, PLCG1, SORBS3/vinexin, and phosphorylated STAT3 and STAT5. Interacts with SEPT6. Interacts with phosphorylated IRS4 and PIK3R1. Widely expressed with higher expression in brain and testis where it is expressed by spermatocytes and early spermatids. Also significantly expressed in spleen, skeletal muscle and kidney.

It is found in the cytoplasm. The protein localises to the nucleus. Its subcellular location is the cell membrane. The protein operates within protein modification; protein ubiquitination. Functionally, substrate-recognition component of a cullin-5-RING E3 ubiquitin-protein ligase complex (ECS complex, also named CRL5 complex), which mediates the ubiquitination and subsequent proteasomal degradation of target proteins, such as DAB1 and IRS1. Specifically recognizes and binds phosphorylated proteins via its SH2 domain, promoting their ubiquitination. The ECS(SOCS7) complex acts as a key regulator of reelin signaling by mediating ubiquitination and degradation of phosphorylated DAB1 in the cortical plate of the developing cerebral cortex, thereby regulating neuron positioning during cortex development. Functions in insulin signaling and glucose homeostasis through IRS1 ubiquitination and subsequent proteasomal degradation. Also inhibits prolactin, growth hormone and leptin signaling by preventing STAT3 and STAT5 activation, sequestering them in the cytoplasm and reducing their binding to DNA. This Mus musculus (Mouse) protein is Suppressor of cytokine signaling 7.